The following is a 397-amino-acid chain: Ribosomal RNA processing protein 1 homolog (397 aa).

Basic and acidic residues predominate over residues 334 to 343; the sequence is EAAEAARQEN. Residues 334–366 are disordered; it reads EAAEAARQENGDDVPDDEIAEVKKGNGKKTAVP.

This sequence belongs to the RRP1 family.

Its subcellular location is the nucleus. Its function is as follows. May be involved in the generation of 28S rRNA. The polypeptide is Ribosomal RNA processing protein 1 homolog (Caenorhabditis elegans).